The chain runs to 354 residues: UDP-N-acetylglucosamine--N-acetylmuramyl-(pentapeptide) pyrophosphoryl-undecaprenol N-acetylglucosamine transferase (354 aa).

UDP-N-acetyl-alpha-D-glucosamine contacts are provided by residues 12-14, Asn124, Arg163, Ser187, Ile240, and Gln285; that span reads TGG.

Belongs to the glycosyltransferase 28 family. MurG subfamily.

Its subcellular location is the cell inner membrane. The catalysed reaction is di-trans,octa-cis-undecaprenyl diphospho-N-acetyl-alpha-D-muramoyl-L-alanyl-D-glutamyl-meso-2,6-diaminopimeloyl-D-alanyl-D-alanine + UDP-N-acetyl-alpha-D-glucosamine = di-trans,octa-cis-undecaprenyl diphospho-[N-acetyl-alpha-D-glucosaminyl-(1-&gt;4)]-N-acetyl-alpha-D-muramoyl-L-alanyl-D-glutamyl-meso-2,6-diaminopimeloyl-D-alanyl-D-alanine + UDP + H(+). The protein operates within cell wall biogenesis; peptidoglycan biosynthesis. Functionally, cell wall formation. Catalyzes the transfer of a GlcNAc subunit on undecaprenyl-pyrophosphoryl-MurNAc-pentapeptide (lipid intermediate I) to form undecaprenyl-pyrophosphoryl-MurNAc-(pentapeptide)GlcNAc (lipid intermediate II). The protein is UDP-N-acetylglucosamine--N-acetylmuramyl-(pentapeptide) pyrophosphoryl-undecaprenol N-acetylglucosamine transferase of Methylococcus capsulatus (strain ATCC 33009 / NCIMB 11132 / Bath).